The following is a 146-amino-acid chain: D-aminoacyl-tRNA deacylase (146 aa).

The Gly-cisPro motif, important for rejection of L-amino acids signature appears at 138-139; it reads GP.

The protein belongs to the DTD family. As to quaternary structure, homodimer.

The protein localises to the cytoplasm. The enzyme catalyses glycyl-tRNA(Ala) + H2O = tRNA(Ala) + glycine + H(+). It carries out the reaction a D-aminoacyl-tRNA + H2O = a tRNA + a D-alpha-amino acid + H(+). An aminoacyl-tRNA editing enzyme that deacylates mischarged D-aminoacyl-tRNAs. Also deacylates mischarged glycyl-tRNA(Ala), protecting cells against glycine mischarging by AlaRS. Acts via tRNA-based rather than protein-based catalysis; rejects L-amino acids rather than detecting D-amino acids in the active site. By recycling D-aminoacyl-tRNA to D-amino acids and free tRNA molecules, this enzyme counteracts the toxicity associated with the formation of D-aminoacyl-tRNA entities in vivo and helps enforce protein L-homochirality. The chain is D-aminoacyl-tRNA deacylase from Xanthomonas oryzae pv. oryzae (strain MAFF 311018).